A 146-amino-acid chain; its full sequence is Hemoglobin subunit beta (146 aa).

Val1 bears the N-acetylvaline mark. Residues 2 to 146 form the Globin domain; sequence HLTGEEKAAV…VANALAHKYH (145 aa). Thr12 bears the Phosphothreonine mark. Ser44 carries the phosphoserine modification. Lys59 is subject to N6-acetyllysine. His63 provides a ligand contact to heme b. Residue Lys82 is modified to N6-acetyllysine. Position 92 (His92) interacts with heme b. Cys93 carries the S-nitrosocysteine modification. The residue at position 144 (Lys144) is an N6-acetyllysine.

Belongs to the globin family. As to quaternary structure, heterotetramer of two alpha chains and two beta chains. Red blood cells.

Its function is as follows. Involved in oxygen transport from the lung to the various peripheral tissues. The sequence is that of Hemoglobin subunit beta (HBB) from Aotus trivirgatus (Three-striped night monkey).